Reading from the N-terminus, the 339-residue chain is DNA-directed RNA polymerase subunit alpha (339 aa).

The interval 1–233 (MVREEVAGST…DLFLPFLHAE (233 aa)) is alpha N-terminal domain (alpha-NTD). The interval 266–339 (GIPLNCIFID…MDLLKNKLSF (74 aa)) is alpha C-terminal domain (alpha-CTD).

It belongs to the RNA polymerase alpha chain family. In plastids the minimal PEP RNA polymerase catalytic core is composed of four subunits: alpha, beta, beta', and beta''. When a (nuclear-encoded) sigma factor is associated with the core the holoenzyme is formed, which can initiate transcription.

The protein localises to the plastid. The protein resides in the chloroplast. It catalyses the reaction RNA(n) + a ribonucleoside 5'-triphosphate = RNA(n+1) + diphosphate. Functionally, DNA-dependent RNA polymerase catalyzes the transcription of DNA into RNA using the four ribonucleoside triphosphates as substrates. This Agrostis stolonifera (Creeping bentgrass) protein is DNA-directed RNA polymerase subunit alpha.